The primary structure comprises 90 residues: Small ribosomal subunit protein uS15 (90 aa).

The protein belongs to the universal ribosomal protein uS15 family. In terms of assembly, part of the 30S ribosomal subunit. Forms a bridge to the 50S subunit in the 70S ribosome, contacting the 23S rRNA.

In terms of biological role, one of the primary rRNA binding proteins, it binds directly to 16S rRNA where it helps nucleate assembly of the platform of the 30S subunit by binding and bridging several RNA helices of the 16S rRNA. Its function is as follows. Forms an intersubunit bridge (bridge B4) with the 23S rRNA of the 50S subunit in the ribosome. The sequence is that of Small ribosomal subunit protein uS15 from Wolinella succinogenes (strain ATCC 29543 / DSM 1740 / CCUG 13145 / JCM 31913 / LMG 7466 / NCTC 11488 / FDC 602W) (Vibrio succinogenes).